A 227-amino-acid chain; its full sequence is ATP synthase F(0) complex subunit a (227 aa).

Transmembrane regions (helical) follow at residues 12-32, 69-89, 98-118, 139-159, 170-190, and 196-216; these read PYLMGMPLILPSLLLPTLLFP, WALLLTSLILLLLSINLMGLL, QLSMNMALAFPLWLATLLIGL, IPILIMIETTSLLIRPLALGV, LLIQLISTATIALLPTMPSIS, and ILLLLTILEVAVAMIQAYVFV.

This sequence belongs to the ATPase A chain family. Component of the ATP synthase complex composed at least of ATP5F1A/subunit alpha, ATP5F1B/subunit beta, ATP5MC1/subunit c (homooctomer), MT-ATP6/subunit a, MT-ATP8/subunit 8, ATP5ME/subunit e, ATP5MF/subunit f, ATP5MG/subunit g, ATP5MK/subunit k, ATP5MJ/subunit j, ATP5F1C/subunit gamma, ATP5F1D/subunit delta, ATP5F1E/subunit epsilon, ATP5PF/subunit F6, ATP5PB/subunit b, ATP5PD/subunit d, ATP5PO/subunit OSCP. ATP synthase complex consists of a soluble F(1) head domain (subunits alpha(3) and beta(3)) - the catalytic core - and a membrane F(0) domain - the membrane proton channel (subunits c, a, 8, e, f, g, k and j). These two domains are linked by a central stalk (subunits gamma, delta, and epsilon) rotating inside the F1 region and a stationary peripheral stalk (subunits F6, b, d, and OSCP). Interacts with DNAJC30; interaction is direct.

The protein resides in the mitochondrion inner membrane. It carries out the reaction H(+)(in) = H(+)(out). Functionally, subunit a, of the mitochondrial membrane ATP synthase complex (F(1)F(0) ATP synthase or Complex V) that produces ATP from ADP in the presence of a proton gradient across the membrane which is generated by electron transport complexes of the respiratory chain. ATP synthase complex consist of a soluble F(1) head domain - the catalytic core - and a membrane F(1) domain - the membrane proton channel. These two domains are linked by a central stalk rotating inside the F(1) region and a stationary peripheral stalk. During catalysis, ATP synthesis in the catalytic domain of F(1) is coupled via a rotary mechanism of the central stalk subunits to proton translocation. With the subunit c (ATP5MC1), forms the proton-conducting channel in the F(0) domain, that contains two crucial half-channels (inlet and outlet) that facilitate proton movement from the mitochondrial intermembrane space (IMS) into the matrix. Protons are taken up via the inlet half-channel and released through the outlet half-channel, following a Grotthuss mechanism. This is ATP synthase F(0) complex subunit a from Coturnix japonica (Japanese quail).